We begin with the raw amino-acid sequence, 115 residues long: Large ribosomal subunit protein bL19 (115 aa).

It belongs to the bacterial ribosomal protein bL19 family.

In terms of biological role, this protein is located at the 30S-50S ribosomal subunit interface and may play a role in the structure and function of the aminoacyl-tRNA binding site. The protein is Large ribosomal subunit protein bL19 of Francisella tularensis subsp. tularensis (strain WY96-3418).